Reading from the N-terminus, the 103-residue chain is UPF0145 protein BCE_1095 (103 aa).

It belongs to the UPF0145 family.

In Bacillus cereus (strain ATCC 10987 / NRS 248), this protein is UPF0145 protein BCE_1095.